Here is a 649-residue protein sequence, read N- to C-terminus: Endoplasmic reticulum membrane protein 65 (649 aa).

Residues 1 to 55 (MGSNTSPGQADPLESENESSLTSRFLPNKRDGGKDNESVIPEKEEPDLNEPVLAV) are disordered. At 1-165 (MGSNTSPGQA…LATPYAIEKT (165 aa)) the chain is on the cytoplasmic side. Over residues 28-43 (NKRDGGKDNESVIPEK) the composition is skewed to basic and acidic residues. Residue Ser94 is modified to Phosphoserine. Residues 166 to 186 (FLFGWFVSVDSFLYIFTLFPI) traverse the membrane as a helical segment. The Lumenal segment spans residues 187-302 (RVLISFFTLS…NFWNPAGWMT (116 aa)). Residue Asn215 is glycosylated (N-linked (GlcNAc...) asparagine). A helical membrane pass occupies residues 303–323 (FFYYFAISLAYMVLHTLVLLY). Over 324 to 366 (QIITLNVTVNSYSNAVLALLMSNQLVEIKGAVFKKFEKENLFQ) the chain is Cytoplasmic. The helical transmembrane segment at 367 to 387 (LTCSDVVERFQITIMVIIIFL) threads the bilayer. At 388 to 414 (RNLAELYTTSSLDQPLLTFKRLKTLLA) the chain is on the lumenal side. The chain crosses the membrane as a helical span at residues 415–435 (PFFWVIGSELFVDWLKHAFII). The Cytoplasmic portion of the chain corresponds to 436–479 (KFNYIKPSIYSRFTDVLCHDYVASGAQLTQTVTGCSQQVARRMG). A helical transmembrane segment spans residues 480-500 (LPVLPLVCVFIRTSMQTWSMF). The Lumenal segment spans residues 501-557 (RSTHSMKQEIAKSIGTIFPTKDNYVYYLPNKEANTYNAGKEASWETLLLSVVRGKSG). The helical transmembrane segment at 558–578 (IAFLFFMAIMLKLLLGKAILA) threads the bilayer. At 579 to 649 (ITQSRYESMQ…RYAMHSKRIW (71 aa)) the chain is on the cytoplasmic side.

The protein belongs to the TAPT1 family. Interacts with slp1.

It localises to the endoplasmic reticulum membrane. May be involved in membrane protein folding. This chain is Endoplasmic reticulum membrane protein 65, found in Schizosaccharomyces pombe (strain 972 / ATCC 24843) (Fission yeast).